The following is a 208-amino-acid chain: Large ribosomal subunit protein uL4 (208 aa).

Residues 45 to 84 are disordered; that stretch reads RQGTHKVKNRSEVRGGGKKPYRQKGTGHARQGSSRSGLMS. The span at 60-71 shows a compositional bias: basic residues; sequence GGKKPYRQKGTG.

It belongs to the universal ribosomal protein uL4 family. As to quaternary structure, part of the 50S ribosomal subunit.

In terms of biological role, one of the primary rRNA binding proteins, this protein initially binds near the 5'-end of the 23S rRNA. It is important during the early stages of 50S assembly. It makes multiple contacts with different domains of the 23S rRNA in the assembled 50S subunit and ribosome. Its function is as follows. Forms part of the polypeptide exit tunnel. This chain is Large ribosomal subunit protein uL4, found in Prosthecochloris aestuarii (strain DSM 271 / SK 413).